A 315-amino-acid chain; its full sequence is MTFSNNFHRLETRLQSQVGRAIGDFNMIEDGDTILVCLSGGKDSYTMLSVLMALQKRAPVDFKLIAMNLDQKQPGFPEEVLPNYLKKLGVEYVIVEADTYSIVKEKVPEGKTTCSLCSRLRRGVIYRTAKELGANKIALGHHRDDIVNTFFLNMFFGGKMKSMPPKLATDNGDHIVIRPLAYCAEKDIASYARAMEFPIIPCNLCGSQENLQRKKVKEMLLEWERQTPGRIDNIFASLRNVVPSHLADTDLFDFNGLTTGLAKIGEDALFGQTAYDQAPLVFAGSHDDRIEFVRFERKPGDKSAEQAVPGEAAAN.

Residues 39-44 (SGGKDS) carry the PP-loop motif motif. [4Fe-4S] cluster-binding residues include C114, C117, and C205.

It belongs to the TtcA family. As to quaternary structure, homodimer. Requires Mg(2+) as cofactor. It depends on [4Fe-4S] cluster as a cofactor.

The protein localises to the cytoplasm. The enzyme catalyses cytidine(32) in tRNA + S-sulfanyl-L-cysteinyl-[cysteine desulfurase] + AH2 + ATP = 2-thiocytidine(32) in tRNA + L-cysteinyl-[cysteine desulfurase] + A + AMP + diphosphate + H(+). It participates in tRNA modification. Functionally, catalyzes the ATP-dependent 2-thiolation of cytidine in position 32 of tRNA, to form 2-thiocytidine (s(2)C32). The sulfur atoms are provided by the cysteine/cysteine desulfurase (IscS) system. This Ralstonia pickettii (strain 12J) protein is tRNA-cytidine(32) 2-sulfurtransferase.